Consider the following 400-residue polypeptide: Nicotinate phosphoribosyltransferase (400 aa).

The residue at position 220 (H220) is a Phosphohistidine; by autocatalysis.

This sequence belongs to the NAPRTase family. Post-translationally, transiently phosphorylated on a His residue during the reaction cycle. Phosphorylation strongly increases the affinity for substrates and increases the rate of nicotinate D-ribonucleotide production. Dephosphorylation regenerates the low-affinity form of the enzyme, leading to product release.

It carries out the reaction nicotinate + 5-phospho-alpha-D-ribose 1-diphosphate + ATP + H2O = nicotinate beta-D-ribonucleotide + ADP + phosphate + diphosphate. It participates in cofactor biosynthesis; NAD(+) biosynthesis; nicotinate D-ribonucleotide from nicotinate: step 1/1. Catalyzes the synthesis of beta-nicotinate D-ribonucleotide from nicotinate and 5-phospho-D-ribose 1-phosphate at the expense of ATP. This is Nicotinate phosphoribosyltransferase from Escherichia coli O157:H7.